The sequence spans 74 residues: Large ribosomal subunit protein bL31 (74 aa).

4 residues coordinate Zn(2+): Cys-16, Cys-18, Cys-38, and Cys-41.

The protein belongs to the bacterial ribosomal protein bL31 family. Type A subfamily. In terms of assembly, part of the 50S ribosomal subunit. Zn(2+) is required as a cofactor.

Functionally, binds the 23S rRNA. The protein is Large ribosomal subunit protein bL31 of Salinispora tropica (strain ATCC BAA-916 / DSM 44818 / JCM 13857 / NBRC 105044 / CNB-440).